A 361-amino-acid polypeptide reads, in one-letter code: Hydroxycarboxylate dehydrogenase B (361 aa).

NAD(+)-binding positions include His48, 122–124 (GRI), 178–182 (LLDYA), His234, Asn270, and 313–316 (GEWE).

The protein belongs to the LDH2/MDH2 oxidoreductase family.

It carries out the reaction 2-hydroxyglutarate + NADP(+) = 2-oxoglutarate + NADPH + H(+). It catalyses the reaction 2-hydroxyglutarate + NAD(+) = 2-oxoglutarate + NADH + H(+). The catalysed reaction is 3-phenyllactate + NADP(+) = 3-phenylpyruvate + NADPH + H(+). The enzyme catalyses 3-phenyllactate + NAD(+) = 3-phenylpyruvate + NADH + H(+). It carries out the reaction (2R)-2-hydroxy-3-(4-hydroxyphenyl)propanoate + NAD(+) = 3-(4-hydroxyphenyl)pyruvate + NADH + H(+). It catalyses the reaction (2R)-2-hydroxy-3-(4-hydroxyphenyl)propanoate + NADP(+) = 3-(4-hydroxyphenyl)pyruvate + NADPH + H(+). The catalysed reaction is (2R)-3-(3,4-dihydroxyphenyl)lactate + NADP(+) = 3-(3,4-dihydroxyphenyl)pyruvate + NADPH + H(+). The enzyme catalyses (2R)-3-(3,4-dihydroxyphenyl)lactate + NAD(+) = 3-(3,4-dihydroxyphenyl)pyruvate + NADH + H(+). Functionally, catalyzes the NAD(P)H-dependent reduction of 2-oxoglutarate, phenylpyruvate and (4-hydroxyphenyl)pyruvate, leading to the respective 2-hydroxycarboxylate in vitro. Shows a preference for NADPH over NADH as a redox partner. Do not catalyze the reverse reactions. In Escherichia coli O157:H7, this protein is Hydroxycarboxylate dehydrogenase B.